A 338-amino-acid chain; its full sequence is Ketol-acid reductoisomerase (NADP(+)) (338 aa).

The region spanning 1–181 is the KARI N-terminal Rossmann domain; that stretch reads MKVFYDKDAD…GGGKAGIIET (181 aa). NADP(+)-binding positions include 24–27, Arg-47, and Ser-52; that span reads YGSQ. His-107 is an active-site residue. Gly-133 is a binding site for NADP(+). The region spanning 182-327 is the KARI C-terminal knotted domain; sequence NFREETETDL…EKLRAMMPWI (146 aa). Positions 190, 194, 226, and 230 each coordinate Mg(2+). Residue Ser-251 coordinates substrate.

The protein belongs to the ketol-acid reductoisomerase family. Mg(2+) serves as cofactor.

The catalysed reaction is (2R)-2,3-dihydroxy-3-methylbutanoate + NADP(+) = (2S)-2-acetolactate + NADPH + H(+). It carries out the reaction (2R,3R)-2,3-dihydroxy-3-methylpentanoate + NADP(+) = (S)-2-ethyl-2-hydroxy-3-oxobutanoate + NADPH + H(+). The protein operates within amino-acid biosynthesis; L-isoleucine biosynthesis; L-isoleucine from 2-oxobutanoate: step 2/4. Its pathway is amino-acid biosynthesis; L-valine biosynthesis; L-valine from pyruvate: step 2/4. Functionally, involved in the biosynthesis of branched-chain amino acids (BCAA). Catalyzes an alkyl-migration followed by a ketol-acid reduction of (S)-2-acetolactate (S2AL) to yield (R)-2,3-dihydroxy-isovalerate. In the isomerase reaction, S2AL is rearranged via a Mg-dependent methyl migration to produce 3-hydroxy-3-methyl-2-ketobutyrate (HMKB). In the reductase reaction, this 2-ketoacid undergoes a metal-dependent reduction by NADPH to yield (R)-2,3-dihydroxy-isovalerate. This chain is Ketol-acid reductoisomerase (NADP(+)), found in Leptothrix cholodnii (strain ATCC 51168 / LMG 8142 / SP-6) (Leptothrix discophora (strain SP-6)).